Here is an 802-residue protein sequence, read N- to C-terminus: Cell division cycle 5-like protein (802 aa).

HTH myb-type domains lie at 1–56 and 57–108; these read MPRI…WLDP and SIKK…DKAA. DNA-binding regions (H-T-H motif) lie at residues 31–54 and 82–104; these read WSRI…YEWL and WRTI…EFLL. The disordered stretch occupies residues 108–143; the sequence is AQRDNEEETTDDPRKLKPGEIDPNPETKPARPDPID. The segment covering 118-127 has biased composition (basic and acidic residues); sequence DDPRKLKPGE. Lysine 135 participates in a covalent cross-link: Glycyl lysine isopeptide (Lys-Gly) (interchain with G-Cter in SUMO2). The stretch at 142–245 forms a coiled coil; that stretch reads IDMDEDELEM…DADFRKLRQQ (104 aa). The short motif at 165 to 271 is the Nuclear localization signal element; the sequence is KKAKRKAREK…KDKQHLKRKK (107 aa). The interval 200 to 206 is required for interaction with CTNNBL1; the sequence is KKRKKKR. Lysine 219 participates in a covalent cross-link: Glycyl lysine isopeptide (Lys-Gly) (interchain with G-Cter in SUMO2). Threonine 227 is modified (phosphothreonine). Over residues 246 to 262 the composition is skewed to basic and acidic residues; it reads DLDGELRSEKEGRDRKK. The segment at 246–278 is disordered; that stretch reads DLDGELRSEKEGRDRKKDKQHLKRKKESDLPSA. An interaction with PPP1R8 region spans residues 260–606; that stretch reads RKKDKQHLKR…NKKGKTVGFG (347 aa). Phosphoserine is present on residues serine 303 and serine 358. Phosphothreonine is present on residues threonine 377, threonine 385, threonine 396, threonine 404, threonine 411, and threonine 415. The span at 409–418 shows a compositional bias: polar residues; it reads LSTPFRTPSH. The segment at 409 to 459 is disordered; it reads LSTPFRTPSHGSEGLTPRSGTTPKPVINSTPGRTPLRDKLNINPEDGMADY. Serine 417 bears the Phosphoserine mark. Phosphothreonine occurs at positions 424 and 430. Residues 426–440 show a composition bias toward polar residues; the sequence is RSGTTPKPVINSTPG. Serine 437 carries the post-translational modification Phosphoserine. A phosphothreonine mark is found at threonine 438 and threonine 442. Lysine 487 is covalently cross-linked (Glycyl lysine isopeptide (Lys-Gly) (interchain with G-Cter in SUMO2)). Positions 501-659 are interaction with DAPK3; it reads ELEEREIDDT…GELSSEAYNQ (159 aa). 2 coiled-coil regions span residues 676–701 and 764–802; these read RYTR…INRG and PRRL…KAKF. An interaction with PLRG1 region spans residues 706 to 800; it reads EAKRAAKMEK…LLLEKETLKA (95 aa).

The protein belongs to the CEF1 family. As to quaternary structure, homodimer. Interacts with DAPK3. Component of the precatalytic, catalytic and postcatalytic spliceosome complexes. Part of a spliceosomal 'core' complex consisting of CDC5L, PLRG1, SPF27, CCAP1, CCAP3 and CCAP6. Interacts with PLRG1, Lodestar/TTF2, and NIPP1/PPP1R8. Component of the minor spliceosome, which splices U12-type introns. Within this complex, interacts with SCNM1. Component of the PRP19-CDC5L splicing complex composed of a core complex comprising a homotetramer of PRPF19, CDC5L, PLRG1 and BCAS2, and at least three less stably associated proteins CTNNBL1, CWC15 and HSPA8. Interacts (via its C-terminus) directly in the complex with PRPF19 and BCAS2. Interacts (via its C-terminus) directly with PRGL1 (via its WD40 repeat domain); the interaction is required for mRNA splicing but not for spliceosome assembly. Also interacts with CTNNBL1. Interacts with PRPF19 (via N-terminus). Interacts with USB1. Interacts with DDX41. In terms of processing, phosphorylated on serine and threonine residues. Phosphorylation on Thr-411 and Thr-438 is required for CDC5L-mediated mRNA splicing. Has no effect on subcellular location nor on homodimerization. Phosphorylated in vitro by CDK2. Phosphorylation enhances interaction with PPP1R8.

It localises to the nucleus. It is found in the nucleus speckle. The protein resides in the cytoplasm. In terms of biological role, DNA-binding protein involved in cell cycle control. May act as a transcription activator. Plays a role in pre-mRNA splicing as core component of precatalytic, catalytic and postcatalytic spliceosomal complexes. Component of the PRP19-CDC5L complex that forms an integral part of the spliceosome and is required for activating pre-mRNA splicing. The PRP19-CDC5L complex may also play a role in the response to DNA damage (DDR). As a component of the minor spliceosome, involved in the splicing of U12-type introns in pre-mRNAs. The polypeptide is Cell division cycle 5-like protein (CDC5L) (Bos taurus (Bovine)).